The primary structure comprises 720 residues: Replication restart protein PriA (720 aa).

The 167-residue stretch at 200–366 folds into the Helicase ATP-binding domain; sequence ILMKNCFTSW…LHKKCFYIKF (167 aa). 213-220 is an ATP binding site; that stretch reads KNNFYLKV. Residues 309–312 carry the DEAH box motif; the sequence is NQEH. The Zn(2+) site is built by Cys425, Cys428, Cys434, Cys437, Cys452, Cys455, Cys465, and Cys468.

This sequence belongs to the helicase family. PriA subfamily. In terms of assembly, component of the replication restart primosome. It depends on Zn(2+) as a cofactor.

The enzyme catalyses Couples ATP hydrolysis with the unwinding of duplex DNA by translocating in the 3'-5' direction.. It catalyses the reaction ATP + H2O = ADP + phosphate + H(+). Its function is as follows. Initiates the restart of stalled replication forks, which reloads the replicative helicase on sites other than the origin of replication. Recognizes and binds to abandoned replication forks and remodels them to uncover a helicase loading site. Promotes assembly of the primosome at these replication forks. The protein is Replication restart protein PriA of Buchnera aphidicola subsp. Schizaphis graminum (strain Sg).